The chain runs to 481 residues: Zygotic gap protein knirps (481 aa).

The segment at residues 2 to 78 (NQTCKVCGEP…VGMSKGGSRY (77 aa)) is a DNA-binding region (nuclear receptor). 2 consecutive NR C4-type zinc fingers follow at residues 5–25 (CKVC…CEGC) and 42–66 (CKND…LRKC). Composition is skewed to low complexity over residues 100-111 (AAAGKAPGHATG), 127-148 (QQQQ…QQQQ), 245-264 (TPPT…AASP), 316-335 (SHSS…SPLS), and 420-440 (TTNS…TSST). 4 disordered regions span residues 100-161 (AAAG…GYTG), 231-294 (SVDS…PHTI), 308-336 (LLPG…PLSF), and 420-442 (TTNS…STEA).

It belongs to the nuclear hormone receptor family. NR0 subfamily.

Its subcellular location is the nucleus. In terms of biological role, transcriptional repressor. Binds to multiple sites in the eve stripe 3 enhancer element. Plays an essential role in the segmentation process both by refining the expression patterns of gap genes and by establishing pair-rules stripes of gene expression. The chain is Zygotic gap protein knirps (kni) from Drosophila virilis (Fruit fly).